Consider the following 69-residue polypeptide: Large ribosomal subunit protein bL31 (69 aa).

Cysteine 17, cysteine 19, cysteine 37, and cysteine 40 together coordinate Zn(2+).

The protein belongs to the bacterial ribosomal protein bL31 family. Type A subfamily. Part of the 50S ribosomal subunit. It depends on Zn(2+) as a cofactor.

Its function is as follows. Binds the 23S rRNA. In Caldicellulosiruptor bescii (strain ATCC BAA-1888 / DSM 6725 / KCTC 15123 / Z-1320) (Anaerocellum thermophilum), this protein is Large ribosomal subunit protein bL31.